Consider the following 62-residue polypeptide: Large ribosomal subunit protein bL35 (62 aa).

A disordered region spans residues 25-62; that stretch reads EQAYRSHLSQNKTTKQKRQARKSVQMHSSDVKRFKALI. Residues 53–62 are compositionally biased toward basic and acidic residues; it reads SDVKRFKALI.

It belongs to the bacterial ribosomal protein bL35 family.

In Mycoplasmopsis fermentans (Mycoplasma fermentans), this protein is Large ribosomal subunit protein bL35.